We begin with the raw amino-acid sequence, 120 residues long: NAD(P)H-quinone oxidoreductase subunit 3, chloroplastic (120 aa).

3 helical membrane-spanning segments follow: residues Phe2–Ile22, Met64–Leu84, and Ile88–Leu108.

The protein belongs to the complex I subunit 3 family. As to quaternary structure, NDH is composed of at least 16 different subunits, 5 of which are encoded in the nucleus.

The protein resides in the plastid. It localises to the chloroplast thylakoid membrane. The catalysed reaction is a plastoquinone + NADH + (n+1) H(+)(in) = a plastoquinol + NAD(+) + n H(+)(out). It carries out the reaction a plastoquinone + NADPH + (n+1) H(+)(in) = a plastoquinol + NADP(+) + n H(+)(out). In terms of biological role, NDH shuttles electrons from NAD(P)H:plastoquinone, via FMN and iron-sulfur (Fe-S) centers, to quinones in the photosynthetic chain and possibly in a chloroplast respiratory chain. The immediate electron acceptor for the enzyme in this species is believed to be plastoquinone. Couples the redox reaction to proton translocation, and thus conserves the redox energy in a proton gradient. This chain is NAD(P)H-quinone oxidoreductase subunit 3, chloroplastic, found in Oenothera biennis (German evening primrose).